Reading from the N-terminus, the 474-residue chain is MAHFNQNFINSIKQDLPSHLCMEDFISYSSKPLRPSIRVNTLKISSKNFIKLMTPKGWHFDPIPWCENGYWIKLDQEVQLGNTIEHLQGLFYIQEASSMLPPTALLSVEQHDAQQYVLDMASAPGSKTTQIAALMGNKGLLVANEYSASRVKVLHANIARMGVANCALTHFDARVFGEYMFEIFDSVLLDAPCSGEGTIRKDPDALKNWDNNDVKGIVDTQKALIDSAFQSLKAGGELVYSTCALSRQENQNVCDYLKQRYPDAVEFINLSSLFPGADKSCTEEGFLHVWPQIYDSEGFFVAKIKKVSSIERVLPEPKKQKNFPFEKASAKKIAEIVEYLKTSFGIVLPSENGIYVRDAEVWLFPEDFHKLIGKMRFQRIGMKLADVLKKGFKVKHEAVLALTSPNTIELTDDEAQVFLMGRDITLSEKVKPQGETIVSYAGVSLGVVKHLGNKLKNNLPRDLVKDKIARYEQS.

Residues 121 to 127 (ASAPGSK), glutamate 145, aspartate 172, and aspartate 190 contribute to the S-adenosyl-L-methionine site. Residue cysteine 243 is the Nucleophile of the active site.

The protein belongs to the class I-like SAM-binding methyltransferase superfamily. RsmB/NOP family.

The protein resides in the cytoplasm. The catalysed reaction is cytidine(1407) in 16S rRNA + S-adenosyl-L-methionine = 5-methylcytidine(1407) in 16S rRNA + S-adenosyl-L-homocysteine + H(+). Functionally, specifically methylates the cytosine at position 1407 (m5C1407) of 16S rRNA. In Shewanella piezotolerans (strain WP3 / JCM 13877), this protein is Ribosomal RNA small subunit methyltransferase F.